The sequence spans 148 residues: Large ribosomal subunit protein bL9 (148 aa).

The protein belongs to the bacterial ribosomal protein bL9 family.

Binds to the 23S rRNA. This Sulfurimonas denitrificans (strain ATCC 33889 / DSM 1251) (Thiomicrospira denitrificans (strain ATCC 33889 / DSM 1251)) protein is Large ribosomal subunit protein bL9.